Reading from the N-terminus, the 518-residue chain is Membrane-bound lytic murein transglycosylase F (518 aa).

An N-terminal signal peptide occupies residues 1 to 21 (MKKLKINYLFIGILALLLAVA). The non-LT domain stretch occupies residues 22–269 (LWPSIPWFGK…RIEEKYLGHG (248 aa)). Positions 270–518 (DDFDYVDTRT…SRKGSEEKQN (249 aa)) are LT domain. E314 is a catalytic residue.

It in the N-terminal section; belongs to the bacterial solute-binding protein 3 family. This sequence in the C-terminal section; belongs to the transglycosylase Slt family.

It is found in the cell outer membrane. It carries out the reaction Exolytic cleavage of the (1-&gt;4)-beta-glycosidic linkage between N-acetylmuramic acid (MurNAc) and N-acetylglucosamine (GlcNAc) residues in peptidoglycan, from either the reducing or the non-reducing ends of the peptidoglycan chains, with concomitant formation of a 1,6-anhydrobond in the MurNAc residue.. In terms of biological role, murein-degrading enzyme that degrades murein glycan strands and insoluble, high-molecular weight murein sacculi, with the concomitant formation of a 1,6-anhydromuramoyl product. Lytic transglycosylases (LTs) play an integral role in the metabolism of the peptidoglycan (PG) sacculus. Their lytic action creates space within the PG sacculus to allow for its expansion as well as for the insertion of various structures such as secretion systems and flagella. This Escherichia coli (strain ATCC 8739 / DSM 1576 / NBRC 3972 / NCIMB 8545 / WDCM 00012 / Crooks) protein is Membrane-bound lytic murein transglycosylase F.